The primary structure comprises 81 residues: Small cysteine-rich protein 6 (81 aa).

The N-terminal stretch at 1–23 is a signal peptide; it reads MDTKVACLLLIILGALTVQGAVS. The propeptide occupies 24-25; the sequence is GN.

It belongs to the Cnidaria small cysteine-rich protein (SCRiP) family. beta subfamily. Contains 4 disulfide bonds.

The protein localises to the secreted. It localises to the nematocyst. Its function is as follows. Induces neurotoxic symptoms on zebrafish. Has also been claimed to be implied in calcification, but tests on homolog proteins suggest that proteins of this family have a neurotoxic function and not a calcification function. The sequence is that of Small cysteine-rich protein 6 from Orbicella faveolata (Mountainous star coral).